The primary structure comprises 873 residues: Coatomer subunit gamma-2 (873 aa).

The span at 1–11 (MIKKFDKKDEE) shows a compositional bias: basic and acidic residues. The interval 1 to 21 (MIKKFDKKDEESGSGSNPFQH) is disordered. HEAT repeat units follow at residues 64 to 101 (TEAT…ISED), 283 to 320 (RELA…KHPS), 321 to 355 (AVTA…GSES), 356 to 392 (SVDR…KYPR), 395 to 430 (SVMM…ENPE), and 467 to 504 (PTPS…QNDD).

This sequence belongs to the COPG family. As to quaternary structure, oligomeric complex.

It is found in the cytoplasm. It localises to the golgi apparatus membrane. The protein resides in the cytoplasmic vesicle. The protein localises to the COPI-coated vesicle membrane. In terms of biological role, the coatomer is a cytosolic protein complex that binds to dilysine motifs and reversibly associates with Golgi non-clathrin-coated vesicles, which further mediate biosynthetic protein transport from the ER, via the Golgi up to the trans Golgi network. Coatomer complex is required for budding from Golgi membranes, and is essential for the retrograde Golgi-to-ER transport of dilysine-tagged proteins. The protein is Coatomer subunit gamma-2 (copg2) of Danio rerio (Zebrafish).